The sequence spans 303 residues: MPGLLSDILAWVVIGTFVAGAVANGRDRELGRRVMTAAWVLFALFWLQLIPHFTLVHKSYIEGLLTIAAVPASLYAGWLLYNGRDTLFVLSRAVAAMGVVYLPFETIPAFTLLGATVPAPRGVLMETVAAQTRFLIESLGYTPQMIVGDQGYLNTFLWMQGSHRLEISVVLACTGLGSIAIFAGLIAAVDAPMGRKLRGLAIAVPIIYALNLLRTTFIAISVGKQYFHLFVDEVLFLFGSSDPYMVSFFISDRIISQALAVVALVGVTYLVVHEVPELLTVIEDVLYMVTGDEYDLRNELGLD.

7 consecutive transmembrane segments (helical) span residues 3-23 (GLLS…GAVA), 36-56 (TAAW…FTLV), 60-80 (YIEG…GWLL), 93-113 (AVAA…FTLL), 169-189 (VVLA…IAAV), 200-220 (LAIA…FIAI), and 259-279 (LAVV…PELL). Cysteine 173 (acyl-thioester intermediate) is an active-site residue. The Proton donor role is filled by arginine 214.

The protein belongs to the exosortase/archaeosortase family. Archaeosortase A subfamily.

Its subcellular location is the cell membrane. Functionally, transpeptidase that recognizes and modifies its substrate by proteolytic cleavage of a sorting signal. Following cleavage, a covalent intermediate is formed via a thioester bond between the archaeosortase and its substrate, which is then transferred and covalently attached to the cell membrane. This sortase recognizes a tripartite structure consisting of a conserved Pro-Gly-Phe (PGF) motif, followed by a transmembrane alpha helix domain and a cluster of basic residues, usually at the C-terminus of target proteins. Confirmed substrates include the cell surface S-layer glycoprotein Csg and HVO_0405. ArtA is required for the C-terminal processing of Csg and for its lipidation and attachment to the archaeal plasma membrane. It is also required for the processing of HVO_0405, which contains an atypical central tripartite structure. The polypeptide is Archaeosortase A (Haloferax volcanii (strain ATCC 29605 / DSM 3757 / JCM 8879 / NBRC 14742 / NCIMB 2012 / VKM B-1768 / DS2) (Halobacterium volcanii)).